Here is a 524-residue protein sequence, read N- to C-terminus: Probable lipid II flippase MurJ (524 aa).

A run of 13 helical transmembrane segments spans residues 44-64, 103-123, 146-166, 172-192, 195-215, 250-270, 284-304, 322-342, 367-387, 396-416, 420-440, 456-476, and 494-514; these read IFGA…PNLL, LLTL…PWVI, ITFP…ILNT, IPAF…LFAA, FNPP…LQLV, ILGV…ASFL, LMEF…LPSL, WGLR…GILA, LIAY…APGF, PVKI…AFIG, HAGL…LLYW, WFLM…FGVL, and LMAV…VLGF.

Belongs to the MurJ/MviN family.

It localises to the cell inner membrane. The protein operates within cell wall biogenesis; peptidoglycan biosynthesis. In terms of biological role, involved in peptidoglycan biosynthesis. Transports lipid-linked peptidoglycan precursors from the inner to the outer leaflet of the cytoplasmic membrane. This Salmonella typhimurium (strain LT2 / SGSC1412 / ATCC 700720) protein is Probable lipid II flippase MurJ.